The sequence spans 722 residues: Ribosomal RNA large subunit methyltransferase K/L (722 aa).

Residues 43 to 154 (IGLRACLWSR…GNEGRVGIDL (112 aa)) form the THUMP domain.

The protein belongs to the methyltransferase superfamily. RlmKL family.

The protein resides in the cytoplasm. It catalyses the reaction guanosine(2445) in 23S rRNA + S-adenosyl-L-methionine = N(2)-methylguanosine(2445) in 23S rRNA + S-adenosyl-L-homocysteine + H(+). The enzyme catalyses guanosine(2069) in 23S rRNA + S-adenosyl-L-methionine = N(2)-methylguanosine(2069) in 23S rRNA + S-adenosyl-L-homocysteine + H(+). Its function is as follows. Specifically methylates the guanine in position 2445 (m2G2445) and the guanine in position 2069 (m7G2069) of 23S rRNA. The chain is Ribosomal RNA large subunit methyltransferase K/L from Magnetococcus marinus (strain ATCC BAA-1437 / JCM 17883 / MC-1).